The following is a 375-amino-acid chain: MTSKIQNPNLAALSAAGVSVWLDDLSRDRLQSGNLQKLIDTKSVVGVTTNPSIFQKAFANGHAYDAQIAELAKRGANVDVTVRTVTTDDVRHACDVLACEWEASHGKDGRVSIEVDPRLAHDTDKTIAQAVELWRIVDHPNLFIKIPATKAGLPAITAVLAEGISVNVTLIFSVQRHREVIDAYLAGIEKAAEAGRDLSKIVSVASFFVSRVDTEIDKRLEKLGSEQALALRGQAGVANARLAYAAYQKAFEGGQRYQTLMARGAQVQRPLWASTGVKNPDYADTLYVTELVAPNTVNTMPETTIDAVADHGVIRGDTISGTTLSSQKVFDSLVAVGVDLIDVFAVLEHEGVQKFVKSWNELLKETQEQLDSVAK.

Lys145 serves as the catalytic Schiff-base intermediate with substrate.

It belongs to the transaldolase family. Type 2 subfamily.

Its subcellular location is the cytoplasm. The catalysed reaction is D-sedoheptulose 7-phosphate + D-glyceraldehyde 3-phosphate = D-erythrose 4-phosphate + beta-D-fructose 6-phosphate. It participates in carbohydrate degradation; pentose phosphate pathway; D-glyceraldehyde 3-phosphate and beta-D-fructose 6-phosphate from D-ribose 5-phosphate and D-xylulose 5-phosphate (non-oxidative stage): step 2/3. Functionally, transaldolase is important for the balance of metabolites in the pentose-phosphate pathway. This chain is Transaldolase, found in Mycobacterium leprae (strain Br4923).